A 573-amino-acid chain; its full sequence is DNA ligase (573 aa).

Glutamate 250 contacts ATP. The active-site N6-AMP-lysine intermediate is lysine 252. Positions 257, 272, 301, 342, 432, and 438 each coordinate ATP.

It belongs to the ATP-dependent DNA ligase family. Requires Mg(2+) as cofactor.

The enzyme catalyses ATP + (deoxyribonucleotide)n-3'-hydroxyl + 5'-phospho-(deoxyribonucleotide)m = (deoxyribonucleotide)n+m + AMP + diphosphate.. Functionally, DNA ligase that seals nicks in double-stranded DNA during DNA replication, DNA recombination and DNA repair. This is DNA ligase from Methanococcus maripaludis (strain C5 / ATCC BAA-1333).